A 188-amino-acid chain; its full sequence is MSIKSDKWIRRMAQEHGMIEPFVERQVRGEQDNRVISFGVSSYGYDVRCADEFKVFTNINSATVDPKNFDAGSFVDIKSDVCIIPPNSFALARTVEYFRIPRDVLTICLGKSTYARCGIIVNVTPLEPEWEGHVTLEFSNTTTLPAKIYANEGVAQMLFLQSDEECEVSYKDRGGKYQGQRGVTLPRT.

Residues 111-116 (KSTYAR), 135-137 (TLE), Q156, Y170, and Q180 contribute to the dCTP site. E137 acts as the Proton donor/acceptor in catalysis.

The protein belongs to the dCTP deaminase family. Homotrimer.

The catalysed reaction is dCTP + H2O + H(+) = dUTP + NH4(+). The protein operates within pyrimidine metabolism; dUMP biosynthesis; dUMP from dCTP (dUTP route): step 1/2. Catalyzes the deamination of dCTP to dUTP. The polypeptide is dCTP deaminase (Pseudomonas putida (strain ATCC 700007 / DSM 6899 / JCM 31910 / BCRC 17059 / LMG 24140 / F1)).